Consider the following 200-residue polypeptide: Probable GTP-binding protein EngB (200 aa).

Positions 22 to 199 constitute an EngB-type G domain; that stretch reads GLDEIALAGR…KDWIQARLYE (178 aa). GTP-binding positions include 30–37, 57–61, 78–81, 145–148, and 178–180; these read GRSNVGKS, GKTQT, DVPG, TKMD, and FSS. Mg(2+) is bound by residues S37 and T59.

The protein belongs to the TRAFAC class TrmE-Era-EngA-EngB-Septin-like GTPase superfamily. EngB GTPase family. Mg(2+) is required as a cofactor.

Its function is as follows. Necessary for normal cell division and for the maintenance of normal septation. This is Probable GTP-binding protein EngB from Lactobacillus delbrueckii subsp. bulgaricus (strain ATCC 11842 / DSM 20081 / BCRC 10696 / JCM 1002 / NBRC 13953 / NCIMB 11778 / NCTC 12712 / WDCM 00102 / Lb 14).